The following is a 1461-amino-acid chain: Potassium channel K2 (1461 aa).

6 helical membrane-spanning segments follow: residues 44–64 (IIEG…LIYI), 142–162 (FNYY…YISL), 183–203 (IYNM…MVII), 218–238 (LIDI…IFVF), 242–262 (IDIY…NVSY), and 281–301 (IVLG…TIQA). Positions 322 to 340 (YFYFSIISISTVGYGDIFP) form an intramembrane region, pore-forming. The helical transmembrane segment at 349–369 (CIIFIFWTFIWVPIQFNDLII) threads the bilayer. The interval 771–794 (KRDDFDNNNNNNNNNIVKSRKKGR) is disordered.

May form oligomers or interact with other proteins.

Its subcellular location is the membrane. Contributes to transmembrane potassium transport. The sequence is that of Potassium channel K2 from Plasmodium falciparum (isolate 3D7).